Here is a 327-residue protein sequence, read N- to C-terminus: Carboxylesterase 20 (327 aa).

Positions 87–89 (HGG) match the Involved in the stabilization of the negatively charged intermediate by the formation of the oxyanion hole motif. S166 serves as the catalytic Nucleophile. Active-site residues include D272 and H302.

The protein belongs to the 'GDXG' lipolytic enzyme family. As to expression, expressed in roots, stems, flowers and siliques.

The catalysed reaction is a carboxylic ester + H2O = an alcohol + a carboxylate + H(+). Esterase activity measured in vitro with the synthetic substrate p-nitrophenyl acetate (pNPA) is inhibited by strigolactone. Its function is as follows. Carboxylesterase that possesses esterase activity in vitro with the synthetic substrate p-nitrophenyl acetate (pNPA). Binds strigolactones, but is not able to hydrolyze them. May be involved in the regulation of shoot branching. The chain is Carboxylesterase 20 from Arabidopsis thaliana (Mouse-ear cress).